The chain runs to 112 residues: Prothymosin alpha-B (112 aa).

Residues 1 to 112 are disordered; sequence MSDTAVDASV…TKKQKTDEDD (112 aa). Residues 9 to 35 are compositionally biased toward basic and acidic residues; the sequence is SVEKSTKDLKAKEKEVVEEAENGKDKP. Acidic residues-rich tracts occupy residues 41–83 and 92–101; these read ENEE…DEVE and EDDEDDDDDV. The segment covering 102-112 has biased composition (basic and acidic residues); sequence ETKKQKTDEDD.

Belongs to the pro/parathymosin family.

The protein resides in the nucleus. The protein is Prothymosin alpha-B (ptma-b) of Xenopus laevis (African clawed frog).